Here is a 193-residue protein sequence, read N- to C-terminus: Putative manganese efflux pump MntP (193 aa).

Transmembrane regions (helical) follow at residues 6–26 (VIFI…GIAC), 48–68 (AGMV…ISAF), 71–91 (WIAF…ALQG), 108–128 (LLGV…AFAV), 132–152 (NIGL…FLGF), and 165–185 (WVGV…LAEH).

The protein belongs to the MntP (TC 9.B.29) family.

The protein resides in the cell membrane. In terms of biological role, probably functions as a manganese efflux pump. This Dehalococcoides mccartyi (strain ATCC BAA-2100 / JCM 16839 / KCTC 5957 / BAV1) protein is Putative manganese efflux pump MntP.